The following is a 353-amino-acid chain: Fe(3+) ions import ATP-binding protein FbpC (353 aa).

One can recognise an ABC transporter domain in the interval 9–239 (VTFENVTKKF…PASAFIADFM (231 aa)). Residue 41–48 (GPSGCGKT) coordinates ATP.

It belongs to the ABC transporter superfamily. Fe(3+) ion importer (TC 3.A.1.10) family. As to quaternary structure, the complex is composed of two ATP-binding proteins (FbpC), two transmembrane proteins (FbpB) and a solute-binding protein (FbpA).

The protein resides in the cell inner membrane. The enzyme catalyses Fe(3+)(out) + ATP + H2O = Fe(3+)(in) + ADP + phosphate + H(+). Functionally, part of the ABC transporter complex FbpABC involved in Fe(3+) ions import. Responsible for energy coupling to the transport system. This chain is Fe(3+) ions import ATP-binding protein FbpC, found in Brucella abortus (strain 2308).